The following is a 264-amino-acid chain: Glutamate 5-kinase (264 aa).

K9 serves as a coordination point for ATP. The substrate site is built by S47, D132, and N144. Residues 164–165 (SD) and 206–212 (TGGIVTK) each bind ATP.

Belongs to the glutamate 5-kinase family.

Its subcellular location is the cytoplasm. It carries out the reaction L-glutamate + ATP = L-glutamyl 5-phosphate + ADP. It functions in the pathway amino-acid biosynthesis; L-proline biosynthesis; L-glutamate 5-semialdehyde from L-glutamate: step 1/2. In terms of biological role, catalyzes the transfer of a phosphate group to glutamate to form L-glutamate 5-phosphate. This is Glutamate 5-kinase from Helicobacter hepaticus (strain ATCC 51449 / 3B1).